A 435-amino-acid polypeptide reads, in one-letter code: MSSVPEPSAALLQRAVAVRRAAVDLGQTDDGQRALALQAMADALTERAATILAANREDLERSAGEGLAPALMARLKLDDTKLAAAIDGVRKVASLSDPLGCRQLHRELDQGLVLERVSVPLGVVGVIFEARPDAVMQIASLAIRSGNGALLKGGSEARCTNEAVMDALQAGLAASPVSADALALLTTRQESLALLRLDGLVDLIIPRGSNELVRFIQDNTRIPVLGHADGVCHLYVDAAADIAKAVRVAVDSKSQYPAACNAIETLLVHRSIAQPFLAAALPAFAAAGVKLRGDAESVALGVAEAATEEDWSTEYLDLILAVKLVDDLEAATDHIRSYGSRHTEVILTEDAQTADRFLAAVDSAGVYHNCSSRFADGFRYGFGAEVGISTQTLPPRGPVGLEGLVTYRYRLRGEGHITADYANGSCVFTHIDRPL.

Belongs to the gamma-glutamyl phosphate reductase family.

It is found in the cytoplasm. It carries out the reaction L-glutamate 5-semialdehyde + phosphate + NADP(+) = L-glutamyl 5-phosphate + NADPH + H(+). It functions in the pathway amino-acid biosynthesis; L-proline biosynthesis; L-glutamate 5-semialdehyde from L-glutamate: step 2/2. In terms of biological role, catalyzes the NADPH-dependent reduction of L-glutamate 5-phosphate into L-glutamate 5-semialdehyde and phosphate. The product spontaneously undergoes cyclization to form 1-pyrroline-5-carboxylate. In Synechococcus sp. (strain CC9605), this protein is Gamma-glutamyl phosphate reductase.